A 103-amino-acid chain; its full sequence is MKGREYEDLAARYLKSKGYQILGRNLRSPYGEIDILAEFEGRKVIVEVKGSETFFPAEKVTPHKLSKIIRTAYEVLGEEPFSIEVVVVYRGKVYHYKDLGLEL.

Belongs to the UPF0102 family.

This Aquifex aeolicus (strain VF5) protein is UPF0102 protein aq_041.